We begin with the raw amino-acid sequence, 473 residues long: Ribulose bisphosphate carboxylase large chain (473 aa).

Residues N116 and T166 each contribute to the substrate site. The active-site Proton acceptor is K168. K170 contributes to the substrate binding site. Residues K194, D196, and E197 each coordinate Mg(2+). Residue K194 is modified to N6-carboxylysine. H287 functions as the Proton acceptor in the catalytic mechanism. Substrate contacts are provided by R288, H320, and S372.

This sequence belongs to the RuBisCO large chain family. Type I subfamily. Heterohexadecamer of 8 large chains and 8 small chains. Mg(2+) is required as a cofactor.

It catalyses the reaction 2 (2R)-3-phosphoglycerate + 2 H(+) = D-ribulose 1,5-bisphosphate + CO2 + H2O. The catalysed reaction is D-ribulose 1,5-bisphosphate + O2 = 2-phosphoglycolate + (2R)-3-phosphoglycerate + 2 H(+). Functionally, ruBisCO catalyzes two reactions: the carboxylation of D-ribulose 1,5-bisphosphate, the primary event in carbon dioxide fixation, as well as the oxidative fragmentation of the pentose substrate. Both reactions occur simultaneously and in competition at the same active site. The polypeptide is Ribulose bisphosphate carboxylase large chain (Thiomonas intermedia (strain K12) (Thiobacillus intermedius)).